Here is a 384-residue protein sequence, read N- to C-terminus: Putative glutamate--cysteine ligase 2-2 (384 aa).

This sequence belongs to the glutamate--cysteine ligase type 2 family. YbdK subfamily.

The enzyme catalyses L-cysteine + L-glutamate + ATP = gamma-L-glutamyl-L-cysteine + ADP + phosphate + H(+). Its function is as follows. ATP-dependent carboxylate-amine ligase which exhibits weak glutamate--cysteine ligase activity. This is Putative glutamate--cysteine ligase 2-2 from Rubrobacter xylanophilus (strain DSM 9941 / JCM 11954 / NBRC 16129 / PRD-1).